Here is a 513-residue protein sequence, read N- to C-terminus: Bifunctional purine biosynthesis protein PurH (513 aa).

The MGS-like domain occupies 1-144; sequence MKRALISVSD…KNYQDVTVVT (144 aa).

This sequence belongs to the PurH family.

The catalysed reaction is (6R)-10-formyltetrahydrofolate + 5-amino-1-(5-phospho-beta-D-ribosyl)imidazole-4-carboxamide = 5-formamido-1-(5-phospho-D-ribosyl)imidazole-4-carboxamide + (6S)-5,6,7,8-tetrahydrofolate. The enzyme catalyses IMP + H2O = 5-formamido-1-(5-phospho-D-ribosyl)imidazole-4-carboxamide. The protein operates within purine metabolism; IMP biosynthesis via de novo pathway; 5-formamido-1-(5-phospho-D-ribosyl)imidazole-4-carboxamide from 5-amino-1-(5-phospho-D-ribosyl)imidazole-4-carboxamide (10-formyl THF route): step 1/1. It participates in purine metabolism; IMP biosynthesis via de novo pathway; IMP from 5-formamido-1-(5-phospho-D-ribosyl)imidazole-4-carboxamide: step 1/1. The sequence is that of Bifunctional purine biosynthesis protein PurH from Lactobacillus acidophilus (strain ATCC 700396 / NCK56 / N2 / NCFM).